Consider the following 971-residue polypeptide: Sodium/calcium exchanger 1 (971 aa).

The signal sequence occupies residues 1–32; that stretch reads MLRLSLPPNVSMGFRLVTLVALLFTHVDHITA. Residues 33 to 71 lie on the Extracellular side of the membrane; it reads DTEAETGGNETTECTGSYYCKKGVILPIWEPQDPSFGDK. An N-linked (GlcNAc...) asparagine glycan is attached at asparagine 41. Residues 72–92 traverse the membrane as a helical segment; sequence IARATVYFVAMVYMFLGVSII. The Cytoplasmic segment spans residues 93-133; it reads ADRFMSSIEVITSQEKEITIKKPNGETTKTTVRIWNETVSN. Residues 134–154 traverse the membrane as a helical segment; sequence LTLMALGSSAPEILLSVIEVC. Residues 138–178 form an Alpha-1 repeat; sequence ALGSSAPEILLSVIEVCGHNFTAGDLGPSTIVGSAAFNMFI. The Extracellular segment spans residues 155–167; that stretch reads GHNFTAGDLGPST. N-linked (GlcNAc...) asparagine glycosylation occurs at asparagine 157. The helical transmembrane segment at 168 to 188 threads the bilayer; the sequence is IVGSAAFNMFIIIALCVYVVP. The Cytoplasmic segment spans residues 189–201; the sequence is DGETRKIKHLRVF. The chain crosses the membrane as a helical span at residues 202–222; sequence FVTAAWSIFAYTWLYIILSVS. At 223-228 the chain is on the extracellular side; it reads SPGVVE. The helical transmembrane segment at 229-249 threads the bilayer; sequence VWEGLLTFFFFPICVVFAWVA. Residues 250–798 are Cytoplasmic-facing; that stretch reads DRRLLFYKYV…FVPPTEYWNG (549 aa). The putative calmodulin-binding region stretch occupies residues 251–270; that stretch reads RRLLFYKYVYKRYRAGKQRG. A phosphoserine mark is found at serine 282 and serine 389. Calx-beta domains are found at residues 393-493 and 524-624; these read VNMD…VHLS and ATIT…IEIG. Positions 417, 453, 478, 479, 481, 483, 486, 530, 531, 532, 548, 584, 610, 611, 612, and 716 each coordinate Ca(2+). Residues 799–819 traverse the membrane as a helical segment; that stretch reads WACFIVSILMIGLLTAFIGDL. Topologically, residues 820–822 are extracellular; the sequence is ASH. The chain crosses the membrane as a helical span at residues 823 to 843; it reads FGCTIGLKDSVTAVVFVALGT. The Alpha-2 repeat unit spans residues 840–876; sequence ALGTSVPDTFASKVAATQDQYADASIGNVTGSNAVNV. At 844 to 872 the chain is on the cytoplasmic side; sequence SVPDTFASKVAATQDQYADASIGNVTGSN. A helical membrane pass occupies residues 873 to 893; the sequence is AVNVFLGIGVAWSIAAIYHAA. Over 894-904 the chain is Extracellular; it reads NGEQFKVSPGT. The helical transmembrane segment at 905 to 925 threads the bilayer; that stretch reads LAFSVTLFTIFAFINVGVLLY. Residues 926–942 lie on the Cytoplasmic side of the membrane; it reads RRRPEIGGELGGPRTAK. A helical transmembrane segment spans residues 943-963; sequence LLTSSLFVLLWLLYIFFSSLE. At 964–971 the chain is on the extracellular side; the sequence is AYCHIKGF.

This sequence belongs to the Ca(2+):cation antiporter (CaCA) (TC 2.A.19) family. SLC8 subfamily. In terms of tissue distribution, detected in heart, brain cortex and hippocampus (at protein level). Cardiac sarcolemma or brain, and spleen. Expressed in all regions of the kidney, highest levels of expression in the distal convoluted tubule. Expressed throughout the CNS, in decreasing order of abundance in hippocampus, cortex, cerebellum, hypothalamus, midbrain and striatum. Expressed in numerous regions of the brain including multiple cortical layers, hippocampus, septal nuclei, thalamic nuclei, cerebellum, hypothalamus, olfactory bulb and brainstem. Also expressed in various regions of the spinal cord, ventricles and atria of the heart, lung, adrenals and kidney. Isoform 4 seems to be a predominant isoform in aorta, stomach, liver, and kidney.

The protein localises to the cell membrane. It localises to the cell projection. The protein resides in the dendrite. The enzyme catalyses Ca(2+)(in) + 3 Na(+)(out) = Ca(2+)(out) + 3 Na(+)(in). Activated by micromolar levels of Ca(2+). Its activity is regulated as follows. Only active at low calcium concentrations. Not activated by PKC. With respect to regulation, active at all calcium levels tested. Activated by PKC. Only active at low calcium concentrations. Activated by PKC. Its function is as follows. Mediates the exchange of one Ca(2+) ion against three to four Na(+) ions across the cell membrane, and thereby contributes to the regulation of cytoplasmic Ca(2+) levels and Ca(2+)-dependent cellular processes. Contributes to Ca(2+) transport during excitation-contraction coupling in muscle. In a first phase, voltage-gated channels mediate the rapid increase of cytoplasmic Ca(2+) levels due to release of Ca(2+) stores from the endoplasmic reticulum. SLC8A1 mediates the export of Ca(2+) from the cell during the next phase, so that cytoplasmic Ca(2+) levels rapidly return to baseline. Required for normal embryonic heart development and the onset of heart contractions. The chain is Sodium/calcium exchanger 1 (Slc8a1) from Rattus norvegicus (Rat).